The following is a 177-amino-acid chain: Photosystem I assembly protein Ycf4 (177 aa).

Helical transmembrane passes span 20-40 (VALLVSIGGVGFLLTSASSYF) and 60-80 (LVMGAYGVGAVLLSSYLWAVI).

Belongs to the Ycf4 family.

Its subcellular location is the cellular thylakoid membrane. In terms of biological role, seems to be required for the assembly of the photosystem I complex. This Synechococcus sp. (strain RCC307) protein is Photosystem I assembly protein Ycf4.